Here is a 181-residue protein sequence, read N- to C-terminus: uncharacterized protein (181 aa).

The signal sequence occupies residues 1–22 (MNKKSLLVVLVIALAVVPFAAT).

This is an uncharacterized protein from Halorubrum pleomorphic virus 1 (HRPV-1).